Here is a 260-residue protein sequence, read N- to C-terminus: Adenosylcobinamide-GDP ribazoletransferase (260 aa).

7 consecutive transmembrane segments (helical) span residues 42 to 62 (PLAG…ANAI), 64 to 84 (LPPL…TGAL), 117 to 137 (FAAL…MAII), 144 to 164 (YALL…LAFW), 192 to 212 (GLGL…VALI), 214 to 234 (ALVL…AKIG), and 240 to 260 (TLGA…VMAL).

Belongs to the CobS family. The cofactor is Mg(2+).

The protein resides in the cell inner membrane. It carries out the reaction alpha-ribazole + adenosylcob(III)inamide-GDP = adenosylcob(III)alamin + GMP + H(+). It catalyses the reaction alpha-ribazole 5'-phosphate + adenosylcob(III)inamide-GDP = adenosylcob(III)alamin 5'-phosphate + GMP + H(+). Its pathway is cofactor biosynthesis; adenosylcobalamin biosynthesis; adenosylcobalamin from cob(II)yrinate a,c-diamide: step 7/7. In terms of biological role, joins adenosylcobinamide-GDP and alpha-ribazole to generate adenosylcobalamin (Ado-cobalamin). Also synthesizes adenosylcobalamin 5'-phosphate from adenosylcobinamide-GDP and alpha-ribazole 5'-phosphate. The polypeptide is Adenosylcobinamide-GDP ribazoletransferase (Brucella abortus (strain S19)).